Reading from the N-terminus, the 238-residue chain is Ribonuclease Rh (238 aa).

The signal sequence occupies residues 1–16; that stretch reads MKAVLALATLIGSTLA. Intrachain disulfides connect C19–C36, C26–C69, C35–C136, C79–C128, and C198–C229. Active-site residues include H62, E121, and H125.

The protein belongs to the RNase T2 family.

The catalysed reaction is a ribonucleotidyl-ribonucleotide-RNA + H2O = a 3'-end 3'-phospho-ribonucleotide-RNA + a 5'-end dephospho-ribonucleoside-RNA + H(+). In terms of biological role, this is a base non-specific ribonuclease. This is Ribonuclease Rh from Rhizopus niveus.